We begin with the raw amino-acid sequence, 214 residues long: Large ribosomal subunit protein uL3 (214 aa).

Position 151 is an N5-methylglutamine (Q151).

It belongs to the universal ribosomal protein uL3 family. In terms of assembly, part of the 50S ribosomal subunit. Forms a cluster with proteins L14 and L19. In terms of processing, methylated by PrmB.

Functionally, one of the primary rRNA binding proteins, it binds directly near the 3'-end of the 23S rRNA, where it nucleates assembly of the 50S subunit. This is Large ribosomal subunit protein uL3 from Magnetococcus marinus (strain ATCC BAA-1437 / JCM 17883 / MC-1).